Reading from the N-terminus, the 204-residue chain is Translation initiation factor 2 subunit beta (204 aa).

Positions 146 to 204 (NLEEGQVLDVEIQSLSKRGDGVVKMGRYIMYVSNAKPGQSVKIKISRISGSIVFTERAE) constitute a TRAM domain.

Belongs to the eIF-2-beta/eIF-5 family. Heterotrimer composed of an alpha, a beta and a gamma chain.

Functionally, eIF-2 functions in the early steps of protein synthesis by forming a ternary complex with GTP and initiator tRNA. This chain is Translation initiation factor 2 subunit beta, found in Methanoregula boonei (strain DSM 21154 / JCM 14090 / 6A8).